A 323-amino-acid polypeptide reads, in one-letter code: MTKPAKIGVLLANLGTPDSPTPKSISRYLWQFLTDPRVVDLPRCKWYPLLKAIILPLRSKRIAKNYQAIWTEQGSPLLAISRQQKDALQAYLDNQNIDTQVEIAMTYGNPSMQSAVKNLLKNQVERIIVLPLYPQYSSSTTGAVFDAFANALKEERGLLPFDFIHSYHIDENYINALADSIKVRLKSDEFLLFSYHGIPLRYEKMGDYYREHCKQTTIAVVNKLGLTENQWRMTFQSRFGREEWLQPYTDKFLESAAAQNIQKIAVICPGFSVDCLETIEEIDEENRENFLNNGGQSYQYIPALNVEHAHIEMMGKLILEKLT.

The Fe cation site is built by H196 and E277.

This sequence belongs to the ferrochelatase family.

It localises to the cytoplasm. It carries out the reaction heme b + 2 H(+) = protoporphyrin IX + Fe(2+). The protein operates within porphyrin-containing compound metabolism; protoheme biosynthesis; protoheme from protoporphyrin-IX: step 1/1. Its function is as follows. Catalyzes the ferrous insertion into protoporphyrin IX. This chain is Ferrochelatase, found in Haemophilus influenzae (strain ATCC 51907 / DSM 11121 / KW20 / Rd).